Consider the following 160-residue polypeptide: Eosinophil cationic protein (160 aa).

Residues 1 to 27 (MVPKLFTSQICLLLLLGLSGVGGSLHA) form the signal peptide. The interval 28-72 (KPRQFTRAQWFAIQHVSLNPPQCTTAMRVINNYQRRCKDQNTFLR) is required for nearly all of the bactericidal activities; partially involved in LPS-binding. The Proton acceptor role is filled by H42. 4 disulfide bridges follow: C50–C110, C64–C123, C82–C138, and C89–C98. 3'-nitrotyrosine is present on Y60. 65 to 69 (KDQNT) lines the substrate pocket. N-linked (GlcNAc...) asparagine glycosylation is found at N86, N92, N111, and N119. Residue H155 is the Proton donor of the active site.

The protein belongs to the pancreatic ribonuclease family. Interacts with bacterial lipopolysaccharide (LPS) and lipoteichoic acid (LTA). In vitro interacts with phospholipid bilayers.

The protein localises to the secreted. Its function is as follows. Cytotoxin and helminthotoxin with low-efficiency ribonuclease activity. Possesses a wide variety of biological activities. Exhibits antibacterial activity. This is Eosinophil cationic protein (RNASE3) from Pongo pygmaeus (Bornean orangutan).